A 226-amino-acid chain; its full sequence is Large ribosomal subunit protein uL1 (226 aa).

It belongs to the universal ribosomal protein uL1 family. As to quaternary structure, part of the 50S ribosomal subunit.

Binds directly to 23S rRNA. Probably involved in E site tRNA release. Its function is as follows. Protein L1 is also a translational repressor protein, it controls the translation of its operon by binding to its mRNA. The polypeptide is Large ribosomal subunit protein uL1 (Korarchaeum cryptofilum (strain OPF8)).